We begin with the raw amino-acid sequence, 557 residues long: Formate--tetrahydrofolate ligase (557 aa).

66–73 (TPAGEGKS) is an ATP binding site.

Belongs to the formate--tetrahydrofolate ligase family.

It carries out the reaction (6S)-5,6,7,8-tetrahydrofolate + formate + ATP = (6R)-10-formyltetrahydrofolate + ADP + phosphate. The protein operates within one-carbon metabolism; tetrahydrofolate interconversion. The sequence is that of Formate--tetrahydrofolate ligase from Clostridium botulinum (strain Okra / Type B1).